A 163-amino-acid chain; its full sequence is Acetolactate synthase isozyme 3 small subunit (163 aa).

An ACT domain is found at 4-78 (ILSVLLENES…DVLRVSELGQ (75 aa)).

It belongs to the acetolactate synthase small subunit family. Dimer of large and small chains.

The catalysed reaction is 2 pyruvate + H(+) = (2S)-2-acetolactate + CO2. The protein operates within amino-acid biosynthesis; L-isoleucine biosynthesis; L-isoleucine from 2-oxobutanoate: step 1/4. It participates in amino-acid biosynthesis; L-valine biosynthesis; L-valine from pyruvate: step 1/4. Its activity is regulated as follows. Sensitive to valine inhibition. This chain is Acetolactate synthase isozyme 3 small subunit (ilvH), found in Salmonella typhimurium (strain LT2 / SGSC1412 / ATCC 700720).